Here is a 401-residue protein sequence, read N- to C-terminus: Methyltransferase cfoC (401 aa).

Aspartate 268 serves as a coordination point for S-adenosyl-L-methionine. Catalysis depends on histidine 308, which acts as the Proton acceptor.

It belongs to the class I-like SAM-binding methyltransferase superfamily. Cation-independent O-methyltransferase family.

Its pathway is secondary metabolite biosynthesis; flavonoid biosynthesis. Methyltransferase; part of the gene cluster that mediates the biosynthesis of chlorflavonin, a fungal flavonoid with acetolactate synthase inhibitory activity. Within the pathway, cfoC is responsible for the methylation at position C8-OH of flavonoid. The pathway begins with the PKS-NRPS hybrid synthetase cfoA that uses benzoic acid or p-hydroxybenzoic acid as a starter unit with four rounds of chain elongation using malonyl-CoA to form the chalcone skeleton. Then, a new type of chalcone isomerase, cfoK, catalyzes the conversion of the chalcone into a flavanone by a histidine-mediated oxa-Michael addition mechanism. The desaturation of flavanone to flavone is catalyzed by a new type of flavone synthase, the flavin mononucleotide (FMN)-dependent oxidoreductase cfoJ. Monooxygenases cfoF, cfoG, and P450 cfoH are responsible for the hydroxylation of the flavonoid skeleton at sites C3, C8, and C2', respectively. Like cfoF, the dehydratase cfoI also plays a role in the hydroxylation of position C3. Methyltransferases cfoB, cfoC, and cfoD then catalyze the methylation of C7-OH, C8-OH, and C3-OH, respectively. Finally, the monooxygenase cfoE is responsible for the chlorination of flavonoid at position C3'. The chain is Methyltransferase cfoC from Aspergillus candidus.